The chain runs to 119 residues: Beta-2-microglobulin (119 aa).

The signal sequence occupies residues 1–20 (MARFVVAALLVLLCLSGLEA). Residues 25 to 114 (PKIQVYSRHP…VTFPTPKTVK (90 aa)) form the Ig-like C1-type domain. An intrachain disulfide couples Cys45 to Cys100.

It belongs to the beta-2-microglobulin family. As to quaternary structure, heterodimer of an alpha chain and a beta chain. Beta-2-microglobulin is the beta-chain of major histocompatibility complex class I molecules.

The protein resides in the secreted. In terms of biological role, component of the class I major histocompatibility complex (MHC). Involved in the presentation of peptide antigens to the immune system. The protein is Beta-2-microglobulin (B2M) of Cebus albifrons (White-fronted capuchin).